The chain runs to 360 residues: Alpha-2-macroglobulin receptor-associated protein (360 aa).

The signal sequence occupies residues 1–33 (MAPLRDRVSTLPRLQLLVLLLLPLLLVPQPIAG). Phosphoserine occurs at positions 53 and 138. A coiled-coil region spans residues 222–302 (SKHSELKDRL…KHNHYQKQLE (81 aa)). The segment at 240 to 356 (RLRKVSHQGY…DLSSRVSRAR (117 aa)) is LDL receptor binding. Asn271 carries an N-linked (GlcNAc...) asparagine glycan. The Prevents secretion from ER signature appears at 357–360 (HNEL).

Belongs to the alpha-2-MRAP family. As to quaternary structure, interacts with the LRP1/alpha-2-macroglobulin receptor heavy and light chains; the interaction is transient and coincides with a reduction of ligand binding by the receptor. Interacts with LRP2/glycoprotein 330. Interacts with LRP1B; binding is followed by internalization and degradation. Interacts with LDLR. Interacts with SORL1. Interacts with LRP1; this interaction is followed by rapid internalization. N-glycosylated.

Its subcellular location is the rough endoplasmic reticulum lumen. The protein resides in the endoplasmic reticulum-Golgi intermediate compartment lumen. It localises to the golgi apparatus. The protein localises to the cis-Golgi network. It is found in the golgi apparatus lumen. Its subcellular location is the endosome lumen. The protein resides in the cell surface. Functionally, molecular chaperone for LDL receptor-related proteins that may regulate their ligand binding activity along the secretory pathway. The polypeptide is Alpha-2-macroglobulin receptor-associated protein (Lrpap1) (Rattus norvegicus (Rat)).